We begin with the raw amino-acid sequence, 459 residues long: Phosphomethylpyrimidine synthase (459 aa).

Residues Asn80, Met109, Tyr139, His175, 195-197 (SRG), 236-239 (DSLR), and Glu275 each bind substrate. His279 provides a ligand contact to Zn(2+). Tyr302 contributes to the substrate binding site. His343 is a Zn(2+) binding site. Residues Cys423, Cys426, and Cys431 each contribute to the [4Fe-4S] cluster site.

Belongs to the ThiC family. [4Fe-4S] cluster serves as cofactor.

The enzyme catalyses 5-amino-1-(5-phospho-beta-D-ribosyl)imidazole + S-adenosyl-L-methionine = 4-amino-2-methyl-5-(phosphooxymethyl)pyrimidine + CO + 5'-deoxyadenosine + formate + L-methionine + 3 H(+). Its pathway is cofactor biosynthesis; thiamine diphosphate biosynthesis. Catalyzes the synthesis of the hydroxymethylpyrimidine phosphate (HMP-P) moiety of thiamine from aminoimidazole ribotide (AIR) in a radical S-adenosyl-L-methionine (SAM)-dependent reaction. The chain is Phosphomethylpyrimidine synthase from Gloeothece citriformis (strain PCC 7424) (Cyanothece sp. (strain PCC 7424)).